A 419-amino-acid polypeptide reads, in one-letter code: Argininosuccinate synthase (419 aa).

Residues 9-17 (AYSGGLDTS) and A35 each bind ATP. Y86 and S91 together coordinate L-citrulline. 114 to 122 (AHGATGKGN) is a binding site for ATP. L-aspartate is bound by residues T118, N122, and D123. N122 provides a ligand contact to L-citrulline. L-citrulline contacts are provided by R126, S179, S188, E270, and Y282.

The protein belongs to the argininosuccinate synthase family. Type 1 subfamily. As to quaternary structure, homotetramer.

The catalysed reaction is L-citrulline + L-aspartate + ATP = 2-(N(omega)-L-arginino)succinate + AMP + diphosphate + H(+). It functions in the pathway amino-acid biosynthesis; L-arginine biosynthesis; L-arginine from L-ornithine and carbamoyl phosphate: step 2/3. The protein operates within nitrogen metabolism; urea cycle; (N(omega)-L-arginino)succinate from L-aspartate and L-citrulline: step 1/1. The protein is Argininosuccinate synthase of Drosophila melanogaster (Fruit fly).